The following is a 60-amino-acid chain: Large ribosomal subunit protein bL32 (60 aa).

It belongs to the bacterial ribosomal protein bL32 family.

This chain is Large ribosomal subunit protein bL32, found in Streptococcus sanguinis (strain SK36).